Consider the following 125-residue polypeptide: uncharacterized protein (125 aa).

Disordered stretches follow at residues 1-27 (MNKT…GSSS) and 76-125 (NKNN…RFKK). Low complexity predominate over residues 18–27 (GMNSTTGSSS).

This is an uncharacterized protein from Dictyostelium discoideum (Social amoeba).